We begin with the raw amino-acid sequence, 288 residues long: MTDTVTHTEAATSKYVNVLEGGTELRVHYNDTGAGKETLVLLHGSGPGASGWANFYRNVDAFANAGYRVILVDCPGWGKSDSIVCTGSRSDLNARVLKGVLDTLGIERAHLVGNSMGGHSAVAFALSYPERVGKLVLMGGGTGGPSQFVPMPTEGIKLLQGLYRDPTLENLKKMLNVFVYDASTMTEELMQTRLDNMLARRDHLENFVKSLTANPKQFPDYGHRLNEIKAPALVIWGRDDRFVPLDVGLRLVWGLPNAEFHVFGRCGHWAQWEHAERFNQMLLDFLGQ.

Residues 39 to 274 (LVLLHGSGPG…RCGHWAQWEH (236 aa)) form the AB hydrolase-1 domain. The active-site Proton acceptor is the His-268.

The protein belongs to the AB hydrolase superfamily. MhpC family. As to quaternary structure, homodimer.

It catalyses the reaction (2Z,4E)-2-hydroxy-6-oxonona-2,4-dienedioate + H2O = (2Z)-2-hydroxypenta-2,4-dienoate + succinate + H(+). It carries out the reaction (2Z,4E,7E)-2-hydroxy-6-oxonona-2,4,7-trienedioate + H2O = (2Z)-2-hydroxypenta-2,4-dienoate + fumarate + H(+). The protein operates within aromatic compound metabolism; 3-phenylpropanoate degradation. Functionally, catalyzes the cleavage of the C5-C6 bond of 2-hydroxy-6-oxononadienedioate and 2-hydroxy-6-oxononatrienedioate, a dienol ring fission product of the bacterial meta-cleavage pathway for degradation of phenylpropionic acid. The protein is 2-hydroxy-6-oxononadienedioate/2-hydroxy-6-oxononatrienedioate hydrolase of Paraburkholderia phymatum (strain DSM 17167 / CIP 108236 / LMG 21445 / STM815) (Burkholderia phymatum).